Reading from the N-terminus, the 104-residue chain is Large ribosomal subunit protein bL21 (104 aa).

Belongs to the bacterial ribosomal protein bL21 family. In terms of assembly, part of the 50S ribosomal subunit. Contacts protein L20.

Functionally, this protein binds to 23S rRNA in the presence of protein L20. The sequence is that of Large ribosomal subunit protein bL21 from Helicobacter pylori (strain J99 / ATCC 700824) (Campylobacter pylori J99).